A 217-amino-acid chain; its full sequence is ATP phosphoribosyltransferase (217 aa).

This sequence belongs to the ATP phosphoribosyltransferase family. Short subfamily. In terms of assembly, heteromultimer composed of HisG and HisZ subunits.

It localises to the cytoplasm. It carries out the reaction 1-(5-phospho-beta-D-ribosyl)-ATP + diphosphate = 5-phospho-alpha-D-ribose 1-diphosphate + ATP. Its pathway is amino-acid biosynthesis; L-histidine biosynthesis; L-histidine from 5-phospho-alpha-D-ribose 1-diphosphate: step 1/9. Catalyzes the condensation of ATP and 5-phosphoribose 1-diphosphate to form N'-(5'-phosphoribosyl)-ATP (PR-ATP). Has a crucial role in the pathway because the rate of histidine biosynthesis seems to be controlled primarily by regulation of HisG enzymatic activity. The chain is ATP phosphoribosyltransferase from Polaromonas naphthalenivorans (strain CJ2).